The sequence spans 91 residues: Transcriptional repressor FrmR (91 aa).

It belongs to the FrmR/RcnR family. As to quaternary structure, homotetramer.

It is found in the cytoplasm. Formaldehyde sensor. In the absence of formaldehyde, mediates repression of the frmRAB operon. Acts by binding directly to the frmRAB promoter region. In the presence of formaldehyde, it dissociates from the frmRAB promoter region and allows expression of the formaldehyde detoxification system encoded by frmA and frmB. The protein is Transcriptional repressor FrmR of Escherichia coli (strain UTI89 / UPEC).